A 476-amino-acid chain; its full sequence is Sulfate adenylyltransferase subunit 1 (476 aa).

The tr-type G domain occupies 24–239 (KSLLRFLTCG…LLETVDVDYE (216 aa)). The interval 33–40 (GSVDDGKS) is G1. GTP is bound at residue 33 to 40 (GSVDDGKS). The segment at 91-95 (GITID) is G2. Positions 112-115 (DTPG) are G3. GTP is bound by residues 112-116 (DTPGH) and 167-170 (NKMD). Positions 167-170 (NKMD) are G4. The segment at 205-207 (SAL) is G5.

The protein belongs to the TRAFAC class translation factor GTPase superfamily. Classic translation factor GTPase family. CysN/NodQ subfamily. In terms of assembly, heterodimer composed of CysD, the smaller subunit, and CysN.

The catalysed reaction is sulfate + ATP + H(+) = adenosine 5'-phosphosulfate + diphosphate. The protein operates within sulfur metabolism; hydrogen sulfide biosynthesis; sulfite from sulfate: step 1/3. Functionally, with CysD forms the ATP sulfurylase (ATPS) that catalyzes the adenylation of sulfate producing adenosine 5'-phosphosulfate (APS) and diphosphate, the first enzymatic step in sulfur assimilation pathway. APS synthesis involves the formation of a high-energy phosphoric-sulfuric acid anhydride bond driven by GTP hydrolysis by CysN coupled to ATP hydrolysis by CysD. This Vibrio parahaemolyticus serotype O3:K6 (strain RIMD 2210633) protein is Sulfate adenylyltransferase subunit 1.